A 144-amino-acid polypeptide reads, in one-letter code: Large ribosomal subunit protein uL15 (144 aa).

Residues 1–45 (MNLNTLSPDPGSRPSRRRVGRGIGSGLGKTCGKGHKGQKSRAGGY) form a disordered region. A compositionally biased stretch (gly residues) spans 21-31 (RGIGSGLGKTC).

Belongs to the universal ribosomal protein uL15 family. Part of the 50S ribosomal subunit.

In terms of biological role, binds to the 23S rRNA. In Legionella pneumophila (strain Corby), this protein is Large ribosomal subunit protein uL15.